A 500-amino-acid polypeptide reads, in one-letter code: Maintenance of mitochondrial morphology protein 1 (500 aa).

Topologically, residues 1–42 (MATQVATPLSPSYTSELIIVCHHVLQHSPTPLTPHSLSFTQG) are lumenal. Residues 43-63 (FLLGQLSIALLIFFFIKFFIF) form a helical membrane-spanning segment. Topologically, residues 64–500 (GEPPSADDRS…PGALAPGTFR (437 aa)) are cytoplasmic. Residues 141-375 (QPESLDWFNV…EPRFQQIVLP (235 aa)) form the SMP-LTD domain. Composition is skewed to low complexity over residues 283-294 (SSSPPSTSTTTP) and 302-316 (NSTTSSSTSPPHRPT). Disordered stretches follow at residues 283–316 (SSSPPSTSTTTPNPEHHRSNSTTSSSTSPPHRPT) and 406–500 (EEEE…GTFR). Residues 406-415 (EEEEEEEEDG) are compositionally biased toward acidic residues. The span at 438–471 (EGAKLREAEIRAGVRKQERPGMSRAQTSREEGVR) shows a compositional bias: basic and acidic residues.

The protein belongs to the MMM1 family. Homodimer. Component of the ER-mitochondria encounter structure (ERMES) or MDM complex, composed of MMM1, MDM10, MDM12 and MDM34. An MMM1 homodimer associates with one molecule of MDM12 on each side in a pairwise head-to-tail manner, and the SMP-LTD domains of MMM1 and MDM12 generate a continuous hydrophobic tunnel for phospholipid trafficking.

It is found in the endoplasmic reticulum membrane. Component of the ERMES/MDM complex, which serves as a molecular tether to connect the endoplasmic reticulum (ER) and mitochondria. Components of this complex are involved in the control of mitochondrial shape and protein biogenesis, and function in nonvesicular lipid trafficking between the ER and mitochondria. The MDM12-MMM1 subcomplex functions in the major beta-barrel assembly pathway that is responsible for biogenesis of all outer membrane beta-barrel proteins, and acts in a late step after the SAM complex. The MDM10-MDM12-MMM1 subcomplex further acts in the TOM40-specific pathway after the action of the MDM12-MMM1 complex. Essential for establishing and maintaining the structure of mitochondria and maintenance of mtDNA nucleoids. In Phaeosphaeria nodorum (strain SN15 / ATCC MYA-4574 / FGSC 10173) (Glume blotch fungus), this protein is Maintenance of mitochondrial morphology protein 1.